Here is a 213-residue protein sequence, read N- to C-terminus: Uridine kinase (213 aa).

15-22 (GASASGKS) is a binding site for ATP.

Belongs to the uridine kinase family.

The protein resides in the cytoplasm. The catalysed reaction is uridine + ATP = UMP + ADP + H(+). The enzyme catalyses cytidine + ATP = CMP + ADP + H(+). Its pathway is pyrimidine metabolism; CTP biosynthesis via salvage pathway; CTP from cytidine: step 1/3. It participates in pyrimidine metabolism; UMP biosynthesis via salvage pathway; UMP from uridine: step 1/1. In Cronobacter sakazakii (strain ATCC BAA-894) (Enterobacter sakazakii), this protein is Uridine kinase.